The chain runs to 152 residues: MAANSKTAIRLSLRAGERIFINGAVLRADRKVSLELLNDATFLLENHVLQPEDTTTPLRQLYFAAQMMLIEPAMREQAGATFAQMLKGMFATFKDAEILNALKLVDELVHNGRVFEALKTIRAQYPREAELMGAQPVVWPVTKSGKSAGANP.

It belongs to the FlbT family.

Has a post-transcriptional repressor function in flagellum biogenesis. Associates with the 5'-UTR of fljK mRNA and promotes its degradation. The chain is Probable flagellum biosynthesis repressor protein FlbT from Brucella canis (strain ATCC 23365 / NCTC 10854 / RM-666).